The chain runs to 237 residues: Uridylate kinase (237 aa).

12–15 (KLSG) contacts ATP. Residue glycine 53 participates in UMP binding. Positions 54 and 58 each coordinate ATP. UMP is bound by residues aspartate 73 and 134–141 (TGNPYFTT). ATP contacts are provided by threonine 161, tyrosine 167, and aspartate 170.

Belongs to the UMP kinase family. As to quaternary structure, homohexamer.

The protein localises to the cytoplasm. The catalysed reaction is UMP + ATP = UDP + ADP. The protein operates within pyrimidine metabolism; CTP biosynthesis via de novo pathway; UDP from UMP (UMPK route): step 1/1. Inhibited by UTP. Its function is as follows. Catalyzes the reversible phosphorylation of UMP to UDP. In Rhizorhabdus wittichii (strain DSM 6014 / CCUG 31198 / JCM 15750 / NBRC 105917 / EY 4224 / RW1) (Sphingomonas wittichii), this protein is Uridylate kinase.